The primary structure comprises 132 residues: Small ribosomal subunit protein uS8 (132 aa).

This sequence belongs to the universal ribosomal protein uS8 family. As to quaternary structure, part of the 30S ribosomal subunit. Contacts proteins S5 and S12.

One of the primary rRNA binding proteins, it binds directly to 16S rRNA central domain where it helps coordinate assembly of the platform of the 30S subunit. This chain is Small ribosomal subunit protein uS8, found in Rhodococcus jostii (strain RHA1).